The sequence spans 404 residues: Argininosuccinate synthase (404 aa).

Ala-9 to Ser-17 is an ATP binding site. Residue Tyr-86 participates in L-citrulline binding. Residue Gly-116 coordinates ATP. Residues Thr-118, Asn-122, and Asp-123 each coordinate L-aspartate. Position 122 (Asn-122) interacts with L-citrulline. L-citrulline contacts are provided by Arg-126, Ser-174, Ser-183, Glu-259, and Tyr-271.

It belongs to the argininosuccinate synthase family. Type 1 subfamily. As to quaternary structure, homotetramer.

The protein resides in the cytoplasm. It carries out the reaction L-citrulline + L-aspartate + ATP = 2-(N(omega)-L-arginino)succinate + AMP + diphosphate + H(+). The protein operates within amino-acid biosynthesis; L-arginine biosynthesis; L-arginine from L-ornithine and carbamoyl phosphate: step 2/3. The polypeptide is Argininosuccinate synthase (Listeria monocytogenes serovar 1/2a (strain ATCC BAA-679 / EGD-e)).